Reading from the N-terminus, the 453-residue chain is Na(+)/H(+) antiporter NhaA (453 aa).

11 helical membrane passes run Phe27–Ile47, Leu78–Ile98, Ile114–Phe134, Gly143–Gly163, Ile172–Phe192, Gly201–Ala221, Ser222–Val242, Pro316–Ala336, Phe346–Thr366, Trp385–Val405, and Ile421–Tyr441.

It belongs to the NhaA Na(+)/H(+) (TC 2.A.33) antiporter family.

The protein resides in the cell inner membrane. It catalyses the reaction Na(+)(in) + 2 H(+)(out) = Na(+)(out) + 2 H(+)(in). Its function is as follows. Na(+)/H(+) antiporter that extrudes sodium in exchange for external protons. This chain is Na(+)/H(+) antiporter NhaA, found in Bartonella tribocorum (strain CIP 105476 / IBS 506).